The primary structure comprises 486 residues: Cardiolipin synthase A (486 aa).

The next 2 helical transmembrane spans lie at 3 to 23 and 38 to 58; these read TVYT…IAGV and MAWL…YLAV. 2 PLD phosphodiesterase domains span residues 219–246 and 399–426; these read MDLR…VDPR and EGGL…DMRS. Catalysis depends on residues histidine 224, lysine 226, aspartate 231, histidine 404, lysine 406, and aspartate 411.

This sequence belongs to the phospholipase D family. Cardiolipin synthase subfamily. ClsA sub-subfamily.

The protein resides in the cell inner membrane. The catalysed reaction is 2 a 1,2-diacyl-sn-glycero-3-phospho-(1'-sn-glycerol) = a cardiolipin + glycerol. Functionally, catalyzes the reversible phosphatidyl group transfer from one phosphatidylglycerol molecule to another to form cardiolipin (CL) (diphosphatidylglycerol) and glycerol. The protein is Cardiolipin synthase A of Shigella flexneri.